A 46-amino-acid polypeptide reads, in one-letter code: Diuretic hormone (46 aa).

Isoleucine amide is present on Ile46.

It belongs to the sauvagine/corticotropin-releasing factor/urotensin I family.

It is found in the secreted. Its function is as follows. Regulation of fluid secretion. Stimulates primary urine secretion by Malpighian tubules and causes a dose-dependent stimulation of cAMP levels in the tubules. In Periplaneta americana (American cockroach), this protein is Diuretic hormone.